Reading from the N-terminus, the 178-residue chain is Inorganic pyrophosphatase (178 aa).

Residues K30, R44, and Y56 each coordinate substrate. D66, D71, and D103 together coordinate Mg(2+). Y142 contributes to the substrate binding site.

This sequence belongs to the PPase family. Homohexamer. The cofactor is Mg(2+).

It localises to the cytoplasm. The catalysed reaction is diphosphate + H2O = 2 phosphate + H(+). Its function is as follows. Catalyzes the hydrolysis of inorganic pyrophosphate (PPi) forming two phosphate ions. The protein is Inorganic pyrophosphatase of Xanthomonas campestris pv. campestris (strain ATCC 33913 / DSM 3586 / NCPPB 528 / LMG 568 / P 25).